The sequence spans 485 residues: Inosine-5'-monophosphate dehydrogenase (485 aa).

2 CBS domains span residues 99–154 (IVED…TVKE) and 156–212 (MTRE…KNAV). NAD(+) is bound by residues aspartate 247 and 294-296 (GIG). 2 residues coordinate K(+): glycine 296 and glycine 298. Serine 299 contributes to the IMP binding site. Residue cysteine 301 coordinates K(+). Residue cysteine 301 is the Thioimidate intermediate of the active site. Residues 334–336 (DGG), 357–358 (GN), and 381–385 (YRGMG) each bind IMP. Arginine 397 acts as the Proton acceptor in catalysis. Glutamate 412 lines the IMP pocket. K(+)-binding residues include glutamate 466, serine 467, and histidine 468.

This sequence belongs to the IMPDH/GMPR family. As to quaternary structure, homotetramer. The cofactor is K(+).

It catalyses the reaction IMP + NAD(+) + H2O = XMP + NADH + H(+). It functions in the pathway purine metabolism; XMP biosynthesis via de novo pathway; XMP from IMP: step 1/1. Its activity is regulated as follows. Mycophenolic acid (MPA) is a non-competitive inhibitor that prevents formation of the closed enzyme conformation by binding to the same site as the amobile flap. In contrast, mizoribine monophosphate (MZP) is a competitive inhibitor that induces the closed conformation. MPA is a potent inhibitor of mammalian IMPDHs but a poor inhibitor of the bacterial enzymes. MZP is a more potent inhibitor of bacterial IMPDH. In terms of biological role, catalyzes the conversion of inosine 5'-phosphate (IMP) to xanthosine 5'-phosphate (XMP), the first committed and rate-limiting step in the de novo synthesis of guanine nucleotides, and therefore plays an important role in the regulation of cell growth. This is Inosine-5'-monophosphate dehydrogenase from Pyrococcus furiosus (strain ATCC 43587 / DSM 3638 / JCM 8422 / Vc1).